The following is a 249-amino-acid chain: CDP-diacylglycerol pyrophosphatase (249 aa).

The helical transmembrane segment at 5–25 (GYFLLAVIVIVAAAGVGYWKF) threads the bilayer.

This sequence belongs to the Cdh family.

The protein localises to the cell inner membrane. The catalysed reaction is a CDP-1,2-diacyl-sn-glycerol + H2O = a 1,2-diacyl-sn-glycero-3-phosphate + CMP + 2 H(+). It functions in the pathway phospholipid metabolism; CDP-diacylglycerol degradation; phosphatidate from CDP-diacylglycerol: step 1/1. In Salmonella arizonae (strain ATCC BAA-731 / CDC346-86 / RSK2980), this protein is CDP-diacylglycerol pyrophosphatase.